The sequence spans 128 residues: MVLPASMRLRGSRCFERLQKWGYRFYGTSMVLRVIEADPQLLKAPHRHHNSTACRCAVVISSKVSKRAVIRNRLRRRLHNHLRSRLEVAPEHCNHWVLISLKPVASAIEASPLLEECDRLLHQAGLLS.

Belongs to the RnpA family. As to quaternary structure, consists of a catalytic RNA component (M1 or rnpB) and a protein subunit.

It catalyses the reaction Endonucleolytic cleavage of RNA, removing 5'-extranucleotides from tRNA precursor.. RNaseP catalyzes the removal of the 5'-leader sequence from pre-tRNA to produce the mature 5'-terminus. It can also cleave other RNA substrates such as 4.5S RNA. The protein component plays an auxiliary but essential role in vivo by binding to the 5'-leader sequence and broadening the substrate specificity of the ribozyme. This is Ribonuclease P protein component from Prochlorococcus marinus (strain MIT 9303).